We begin with the raw amino-acid sequence, 264 residues long: MKKMTINDLIKWKQEGRKFATSTAYDASFAQLFESQEMPVLLVGDSLGMVLQGENDTLPVTVDDIVYHTRCVRAGSPNCLLMADMPFMSYATPEQACENAAKLMRAGANMVKIEGGDWLVDTVKMLTERAVPVCAHLGLTPQSVNIFGGYKIQGRDQEKADRMVKDALALQEAGAQIVLLECVPAELAERITKVLDVPVIGIGAGNVTDGQILVMHDMFGISANYMPKFSKNFLAETGDMRKAVAKYIEDVANGVFPDDAHTIA.

Positions 45 and 84 each coordinate Mg(2+). 3-methyl-2-oxobutanoate contacts are provided by residues 45-46 (DS), aspartate 84, and lysine 112. Glutamate 114 serves as a coordination point for Mg(2+). Glutamate 181 functions as the Proton acceptor in the catalytic mechanism.

It belongs to the PanB family. In terms of assembly, homodecamer; pentamer of dimers. Requires Mg(2+) as cofactor.

The protein localises to the cytoplasm. The catalysed reaction is 3-methyl-2-oxobutanoate + (6R)-5,10-methylene-5,6,7,8-tetrahydrofolate + H2O = 2-dehydropantoate + (6S)-5,6,7,8-tetrahydrofolate. It functions in the pathway cofactor biosynthesis; (R)-pantothenate biosynthesis; (R)-pantoate from 3-methyl-2-oxobutanoate: step 1/2. Functionally, catalyzes the reversible reaction in which hydroxymethyl group from 5,10-methylenetetrahydrofolate is transferred onto alpha-ketoisovalerate to form ketopantoate. In Vibrio parahaemolyticus serotype O3:K6 (strain RIMD 2210633), this protein is 3-methyl-2-oxobutanoate hydroxymethyltransferase.